We begin with the raw amino-acid sequence, 138 residues long: Cysteine desulfuration protein SufE (138 aa).

Cys51 functions as the Cysteine persulfide intermediate in the catalytic mechanism.

It belongs to the SufE family. Homodimer. Interacts with SufS.

The protein resides in the cytoplasm. Its pathway is cofactor biosynthesis; iron-sulfur cluster biosynthesis. In terms of biological role, participates in cysteine desulfuration mediated by SufS. Cysteine desulfuration mobilizes sulfur from L-cysteine to yield L-alanine and constitutes an essential step in sulfur metabolism for biosynthesis of a variety of sulfur-containing biomolecules. Functions as a sulfur acceptor for SufS, by mediating the direct transfer of the sulfur atom from the S-sulfanylcysteine of SufS, an intermediate product of cysteine desulfuration process. In Cronobacter sakazakii (strain ATCC BAA-894) (Enterobacter sakazakii), this protein is Cysteine desulfuration protein SufE.